The following is a 213-amino-acid chain: Small ribosomal subunit protein uS5 (213 aa).

The disordered stretch occupies residues 1–41 (MSGRERNGGRSAENNDKKERNERNGRNDRGGRNDRRNQQDE). The 64-residue stretch at 45–108 (FIERVVTINR…EEARKNFFRV (64 aa)) folds into the S5 DRBM domain.

The protein belongs to the universal ribosomal protein uS5 family. As to quaternary structure, part of the 30S ribosomal subunit. Contacts proteins S4 and S8.

In terms of biological role, with S4 and S12 plays an important role in translational accuracy. Its function is as follows. Located at the back of the 30S subunit body where it stabilizes the conformation of the head with respect to the body. The chain is Small ribosomal subunit protein uS5 from Corynebacterium jeikeium (strain K411).